Consider the following 268-residue polypeptide: Hydroxyethylthiazole kinase (268 aa).

M45 lines the substrate pocket. ATP-binding residues include R121 and T167. Substrate is bound at residue G194.

This sequence belongs to the Thz kinase family. Mg(2+) serves as cofactor.

The catalysed reaction is 5-(2-hydroxyethyl)-4-methylthiazole + ATP = 4-methyl-5-(2-phosphooxyethyl)-thiazole + ADP + H(+). It participates in cofactor biosynthesis; thiamine diphosphate biosynthesis; 4-methyl-5-(2-phosphoethyl)-thiazole from 5-(2-hydroxyethyl)-4-methylthiazole: step 1/1. Catalyzes the phosphorylation of the hydroxyl group of 4-methyl-5-beta-hydroxyethylthiazole (THZ). This is Hydroxyethylthiazole kinase from Bacillus cereus (strain Q1).